The following is a 151-amino-acid chain: Putative pre-16S rRNA nuclease (151 aa).

The protein belongs to the YqgF nuclease family.

It localises to the cytoplasm. Its function is as follows. Could be a nuclease involved in processing of the 5'-end of pre-16S rRNA. In Myxococcus xanthus (strain DK1622), this protein is Putative pre-16S rRNA nuclease.